A 506-amino-acid polypeptide reads, in one-letter code: MELSDILASFHASNLIPEGIVACTILLVLLLDLVYSRTCHAWLAWVAMAGLSLASVLLGQQWYQLMNLPTATMTFGGSFQADSLSLVFRAIIAMSCVLCILLSIDYVESTGTAPSEFLVLIATASLGGMLVAGSNDLLMMFVSLETLGLASYLLTGYMKRDVRSNEASLKYLLVGAASSGLFLYGISWMYGISGGHMELNSIAHAIVSLDETKTTTCALALVLMTVGVGFKVAAAPFHQWTPDVYQGSPTPVVAFLSVGSKAAGFILAVRMCTTLFPSFNTEWHLIFTILSILSMIVGNFIAVTQTSLKRMLGYSSVGQAGVMMIGMLTDSPDGYASLIVYLLIYLFMNLGAFACVILFGLRTGTDQIQDYSGLLARDPFLALCLSLCLLSLGGIPPLAGFFGKMYLFLAAWDAGQYSLVWVGLITSVVSIYYYLSVVKIMLVPATQEMSLAVREYPRRAWSLEPIQPLEVGIFVCVLGSILVGVAGNSMVNLMTITMSQAPSLGV.

The next 13 helical transmembrane spans lie at 15-35, 39-59, 84-104, 113-133, 137-157, 172-192, 217-237, 249-269, 283-303, 339-359, 382-402, 418-438, and 471-491; these read LIPEGIVACTILLVLLLDLVY, CHAWLAWVAMAGLSLASVLLG, LSLVFRAIIAMSCVLCILLSI, APSEFLVLIATASLGGMLVAG, LLMMFVSLETLGLASYLLTGY, LLVGAASSGLFLYGISWMYGI, CALALVLMTVGVGFKVAAAPF, PTPVVAFLSVGSKAAGFILAV, WHLIFTILSILSMIVGNFIAV, IVYLLIYLFMNLGAFACVILF, ALCLSLCLLSLGGIPPLAGFF, SLVWVGLITSVVSIYYYLSVV, and VGIFVCVLGSILVGVAGNSMV.

The protein belongs to the complex I subunit 2 family. NDH is composed of at least 16 different subunits, 5 of which are encoded in the nucleus.

It is found in the plastid. It localises to the chloroplast thylakoid membrane. It catalyses the reaction a plastoquinone + NADH + (n+1) H(+)(in) = a plastoquinol + NAD(+) + n H(+)(out). It carries out the reaction a plastoquinone + NADPH + (n+1) H(+)(in) = a plastoquinol + NADP(+) + n H(+)(out). Its function is as follows. NDH shuttles electrons from NAD(P)H:plastoquinone, via FMN and iron-sulfur (Fe-S) centers, to quinones in the photosynthetic chain and possibly in a chloroplast respiratory chain. The immediate electron acceptor for the enzyme in this species is believed to be plastoquinone. Couples the redox reaction to proton translocation, and thus conserves the redox energy in a proton gradient. In Nephroselmis olivacea (Green alga), this protein is NAD(P)H-quinone oxidoreductase subunit 2, chloroplastic.